The primary structure comprises 243 residues: Protein GrpE (243 aa).

It belongs to the GrpE family. As to quaternary structure, homodimer.

It is found in the cytoplasm. Functionally, participates actively in the response to hyperosmotic and heat shock by preventing the aggregation of stress-denatured proteins, in association with DnaK and GrpE. It is the nucleotide exchange factor for DnaK and may function as a thermosensor. Unfolded proteins bind initially to DnaJ; upon interaction with the DnaJ-bound protein, DnaK hydrolyzes its bound ATP, resulting in the formation of a stable complex. GrpE releases ADP from DnaK; ATP binding to DnaK triggers the release of the substrate protein, thus completing the reaction cycle. Several rounds of ATP-dependent interactions between DnaJ, DnaK and GrpE are required for fully efficient folding. This Mycoplasma mobile (strain ATCC 43663 / 163K / NCTC 11711) (Mesomycoplasma mobile) protein is Protein GrpE.